A 351-amino-acid polypeptide reads, in one-letter code: LETM1 domain-containing protein 1 (351 aa).

Residues 1–130 are Cytoplasmic-facing; sequence MLSGMALCRT…FRRDIIKAAP (130 aa). A helical membrane pass occupies residues 131–151; the sequence is VVIISIPPFANYLVFVLMYFF. Topologically, residues 152 to 351 are mitochondrial intermembrane; the sequence is PRQLLIRHFW…SANYLQSIKQ (200 aa). The region spanning 172–351 is the Letm1 RBD domain; sequence IYHRMRVEAY…SANYLQSIKQ (180 aa).

It localises to the mitochondrion outer membrane. It is found in the nucleus. The protein resides in the mitochondrion inner membrane. In terms of biological role, may play an essential role for mitochondrial structure and function. The sequence is that of LETM1 domain-containing protein 1 from Xenopus tropicalis (Western clawed frog).